Here is a 95-residue protein sequence, read N- to C-terminus: Small ribosomal subunit protein bS18 (95 aa).

It belongs to the bacterial ribosomal protein bS18 family. As to quaternary structure, part of the 30S ribosomal subunit. Forms a tight heterodimer with protein bS6.

In terms of biological role, binds as a heterodimer with protein bS6 to the central domain of the 16S rRNA, where it helps stabilize the platform of the 30S subunit. The polypeptide is Small ribosomal subunit protein bS18 (Rickettsia akari (strain Hartford)).